The sequence spans 87 residues: MANTPQAKKRIRRNDRRAEINGARVSRIRTFVKKVEAALAAGDKTAATAALAAAQPELFRGVSKGVVHKNTASRKFSRLTKRIAALG.

The protein belongs to the bacterial ribosomal protein bS20 family.

Functionally, binds directly to 16S ribosomal RNA. The protein is Small ribosomal subunit protein bS20 of Rhizorhabdus wittichii (strain DSM 6014 / CCUG 31198 / JCM 15750 / NBRC 105917 / EY 4224 / RW1) (Sphingomonas wittichii).